Here is a 123-residue protein sequence, read N- to C-terminus: Large ribosomal subunit protein uL29 (123 aa).

The disordered stretch occupies residues 84–123; the sequence is RPKKTRAMRRRLNKHEEGLKTKKQQRKERLYPPRKYAVKA. Positions 86–96 are enriched in basic residues; it reads KKTRAMRRRLN.

Belongs to the universal ribosomal protein uL29 family. As to quaternary structure, component of the large ribosomal subunit.

It localises to the cytoplasm. In terms of biological role, component of the large ribosomal subunit. The ribosome is a large ribonucleoprotein complex responsible for the synthesis of proteins in the cell. This chain is Large ribosomal subunit protein uL29 (RPL35), found in Ophiophagus hannah (King cobra).